Consider the following 394-residue polypeptide: METLAKRLDACQEQLLELYEEDSKHLEKHVQHWKCLRIEAALLFKAREMGYAQVGHQIVPALEISRAKAHVAIEIQLALETLLQSTFGTEPWTLQETSYEMWHAEPKKCLKKQGRTVEVVFDGNPENAMHYTAWTFIYVQTLDGTWCKVYGHVCYAGLYYIVDNMKQFYCNFKNEAKKYGVTGQWEVHDGTQVIVSPASISSTTTTEAEVSSSGLTELVQTTDLYNTTPTPTTITRSNCDPDGTDGILYKDPTPTTPPRKRYRQSLQPPTKHLQHYGVTNVPVDPGSQRVTSDNNNNQRRNPCGNQTTPVIHLQGDPNCLKCLRWRLKKNCSHLFTQVSSTWHLTEKDYTRDSKDGIITIHYYNEEQRDKFLSTVKLPPGIKSCIGYMSMLQFM.

Residues Met-1–Ser-201 are transactivation domain. Residues Asn-226–Thr-235 show a composition bias toward low complexity. A disordered region spans residues Asn-226–Pro-309. A DNA-binding domain region spans residues Thr-307–Met-394.

The protein belongs to the papillomaviridae E2 protein family. In terms of assembly, binds DNA as homodimer. Interacts with protein E1; this interaction greatly increases E1 DNA-binding activity. Interacts with protein L1; this interaction enhances E2-dependent replication and transcription activation. Interacts with protein L2; this interaction inhibits E2 transcriptional activity but not DNA replication function E2. Interacts with protein E7; this interaction inhibits E7 oncogenic activity. Interacts with host TAF1; this interaction modulates E2-dependent transcriptional regulation. Interacts with host BRD4; this interaction mediates E2 transcriptional activation function. Additionally, the interaction with host BRD4 on mitotic chromosomes mediates tethering of the viral genome. Interacts with host TOPBP1; this interaction is required for optimal viral DNA replication. In terms of processing, phosphorylated.

Its subcellular location is the host nucleus. In terms of biological role, plays a role in the initiation of viral DNA replication. A dimer of E2 interacts with a dimer of E1 in order to improve specificity of E1 DNA binding activity. Once the complex recognizes and binds DNA at specific sites, the E2 dimer is removed from DNA. E2 also regulates viral transcription through binding to the E2RE response element (5'-ACCNNNNNNGGT-3') present in multiple copies in the regulatory regions of the viral genome. Activates or represses transcription depending on E2RE's position with regards to proximal promoter elements including the TATA-box. Repression occurs by sterically hindering the assembly of the transcription initiation complex. The protein is Regulatory protein E2 of Homo sapiens (Human).